A 383-amino-acid chain; its full sequence is Glutaminyl-peptide cyclotransferase-like protein (383 aa).

The tract at residues 1-25 (MPSGGRGRPRLQVGERSLLERPSPP) is disordered. The chain crosses the membrane as a helical span at residues 35–57 (LLPQLLLALTVASVFYTIWRIWH). Cys-168 and Cys-192 are disulfide-bonded. Asp-187 is a binding site for Zn(2+). Glu-226 functions as the Proton acceptor in the catalytic mechanism. Glu-227 is a binding site for Zn(2+). Asp-270 serves as the catalytic Proton acceptor. Residue His-352 participates in Zn(2+) binding.

It belongs to the glutaminyl-peptide cyclotransferase family.

The protein localises to the golgi apparatus membrane. The enzyme catalyses N-terminal L-glutaminyl-[peptide] = N-terminal 5-oxo-L-prolyl-[peptide] + NH4(+). Functionally, responsible for the biosynthesis of pyroglutamyl peptides. The polypeptide is Glutaminyl-peptide cyclotransferase-like protein (QPCTL) (Bos taurus (Bovine)).